Consider the following 49-residue polypeptide: Photosystem I reaction center subunit IX (49 aa).

Residues Phe14–Ile34 form a helical membrane-spanning segment.

Belongs to the PsaJ family.

The protein localises to the cellular thylakoid membrane. Its function is as follows. May help in the organization of the PsaE and PsaF subunits. In Nostoc punctiforme (strain ATCC 29133 / PCC 73102), this protein is Photosystem I reaction center subunit IX.